Consider the following 372-residue polypeptide: Mitogen-activated protein kinase spk1 (372 aa).

Over residues 1-25 the composition is skewed to polar residues; the sequence is MASATSTPTIADGNSNKESVATSRS. Residues 1–29 form a disordered region; that stretch reads MASATSTPTIADGNSNKESVATSRSPHTH. Residues 39–327 enclose the Protein kinase domain; that stretch reads YEMINLIGQG…AEEALKHPYV (289 aa). ATP contacts are provided by residues 45 to 53 and lysine 68; that span reads IGQGAYGVV. Aspartate 163 functions as the Proton acceptor in the catalytic mechanism. Residue threonine 199 is modified to Phosphothreonine. Positions 199 to 201 match the TXY motif; it reads TEY. Tyrosine 201 is modified (phosphotyrosine).

The protein belongs to the protein kinase superfamily. CMGC Ser/Thr protein kinase family. MAP kinase subfamily. It depends on Mg(2+) as a cofactor. Post-translationally, dually phosphorylated on Thr-199 and Tyr-201, which activates the enzyme.

It is found in the nucleus. The catalysed reaction is L-seryl-[protein] + ATP = O-phospho-L-seryl-[protein] + ADP + H(+). It carries out the reaction L-threonyl-[protein] + ATP = O-phospho-L-threonyl-[protein] + ADP + H(+). Activated by tyrosine and threonine phosphorylation. In terms of biological role, involved in mating signal transduction pathway. This chain is Mitogen-activated protein kinase spk1 (spk1), found in Schizosaccharomyces pombe (strain 972 / ATCC 24843) (Fission yeast).